Here is a 1661-residue protein sequence, read N- to C-terminus: Pentafunctional AROM polypeptide (1661 aa).

The segment at 1-388 is 3-dehydroquinate synthase; sequence MATNGVKAEP…YEKKASSVVD (388 aa). NAD(+)-binding positions include 50–52, 87–90, 118–120, and Asp-123; these read DTN, ETSK, and GGV. Residue Arg-134 coordinates 7-phospho-2-dehydro-3-deoxy-D-arabino-heptonate. 143 to 144 contacts NAD(+); it reads TT. 2 residues coordinate 7-phospho-2-dehydro-3-deoxy-D-arabino-heptonate: Asp-150 and Lys-156. Lys-165 lines the NAD(+) pocket. Residue Asn-166 participates in 7-phospho-2-dehydro-3-deoxy-D-arabino-heptonate binding. NAD(+) is bound by residues 183 to 186 and Asn-194; that span reads FLET. Residue Glu-198 coordinates Zn(2+). 7-phospho-2-dehydro-3-deoxy-D-arabino-heptonate contacts are provided by residues 198–201 and Lys-254; that span reads EVVK. Glu-264 acts as the Proton acceptor; for 3-dehydroquinate synthase activity in catalysis. 7-phospho-2-dehydro-3-deoxy-D-arabino-heptonate is bound by residues 268 to 272 and His-275; that span reads RNLLN. His-275 provides a ligand contact to Zn(2+). His-279 functions as the Proton acceptor; for 3-dehydroquinate synthase activity in the catalytic mechanism. 2 residues coordinate 7-phospho-2-dehydro-3-deoxy-D-arabino-heptonate: His-291 and Lys-360. His-291 is a binding site for Zn(2+). The interval 401–850 is EPSP synthase; it reads VHPGIPSDLN…WDILNQQFKA (450 aa). Catalysis depends on Cys-832, which acts as the For EPSP synthase activity. The tract at residues 872-1064 is shikimate kinase; sequence QKSIFIIGMR…KKKKQSFFVC (193 aa). Position 879 to 886 (879 to 886) interacts with ATP; it reads GMRGAGKT. Residues 1065-1285 form a 3-dehydroquinase region; sequence LSAPNLEPCA…TAPGQLSAAD (221 aa). The Proton acceptor; for 3-dehydroquinate dehydratase activity role is filled by His-1188. The Schiff-base intermediate with substrate; for 3-dehydroquinate dehydratase activity role is filled by Lys-1216. Residues 1298-1661 form a shikimate dehydrogenase region; sequence TKKFCIFGSP…LTYSWSLGDW (364 aa).

The protein in the N-terminal section; belongs to the sugar phosphate cyclases superfamily. Dehydroquinate synthase family. This sequence in the 2nd section; belongs to the EPSP synthase family. In the 3rd section; belongs to the shikimate kinase family. It in the 4th section; belongs to the type-I 3-dehydroquinase family. The protein in the C-terminal section; belongs to the shikimate dehydrogenase family. As to quaternary structure, homodimer. It depends on Zn(2+) as a cofactor.

Its subcellular location is the cytoplasm. It carries out the reaction 7-phospho-2-dehydro-3-deoxy-D-arabino-heptonate = 3-dehydroquinate + phosphate. The enzyme catalyses 3-dehydroquinate = 3-dehydroshikimate + H2O. It catalyses the reaction shikimate + NADP(+) = 3-dehydroshikimate + NADPH + H(+). The catalysed reaction is shikimate + ATP = 3-phosphoshikimate + ADP + H(+). It carries out the reaction 3-phosphoshikimate + phosphoenolpyruvate = 5-O-(1-carboxyvinyl)-3-phosphoshikimate + phosphate. The protein operates within metabolic intermediate biosynthesis; chorismate biosynthesis; chorismate from D-erythrose 4-phosphate and phosphoenolpyruvate: step 2/7. It functions in the pathway metabolic intermediate biosynthesis; chorismate biosynthesis; chorismate from D-erythrose 4-phosphate and phosphoenolpyruvate: step 3/7. Its pathway is metabolic intermediate biosynthesis; chorismate biosynthesis; chorismate from D-erythrose 4-phosphate and phosphoenolpyruvate: step 4/7. It participates in metabolic intermediate biosynthesis; chorismate biosynthesis; chorismate from D-erythrose 4-phosphate and phosphoenolpyruvate: step 5/7. The protein operates within metabolic intermediate biosynthesis; chorismate biosynthesis; chorismate from D-erythrose 4-phosphate and phosphoenolpyruvate: step 6/7. Its function is as follows. The AROM polypeptide catalyzes 5 consecutive enzymatic reactions in prechorismate polyaromatic amino acid biosynthesis. This is Pentafunctional AROM polypeptide from Phaeosphaeria nodorum (strain SN15 / ATCC MYA-4574 / FGSC 10173) (Glume blotch fungus).